A 507-amino-acid polypeptide reads, in one-letter code: MDEFQRNSNKHRSWQQFFLYPLFFREDLYAIAHDHHLHRSGSSEPTEILVSNFVSFLTVKRSIRRIRKQNNSISLFGNSDSNKFIEYNKNFSFKSILEGFTIVLEVSFAMRSKHFIKGMDGWNSLRSIHCIFPFMEDKLPHSNYISDIRVPYSIHPEILVRIFRRWILDAPSLHLLRLILHECSFSRENLQKAMITQRENTRFSLFLWNSYVYECESFLIPLIKRFFNSQSLLYGSFPDRTHFEKKIKDIVLFPLQKISTKKIWLLKDSFIHYVRYGERSLIALKGTHLQVKKCRYHLFHFLQYYFHLWFQPYRICSLELSKTSFSFLGFFMHVKMRPLVVRAKMLDDLFITDLITNELNSTAPLKSILFSLAKEKFCDISGWPISKLSWTSLSDDDILDRFDRIWINLFHYYSGSINQDGLYHIKYILLISCAKTLACKHKSTIRVVREQLGSELFTKSFSKERESISSSFSKTRSQRERIWNSEISQITPLASFWQKMENKQIEN.

The protein belongs to the intron maturase 2 family. MatK subfamily.

It is found in the plastid. The protein resides in the chloroplast. Functionally, usually encoded in the trnK tRNA gene intron. Probably assists in splicing its own and other chloroplast group II introns. The sequence is that of Maturase K from Calocedrus decurrens (California incense-cedar).